An 86-amino-acid polypeptide reads, in one-letter code: Myosuppressin (86 aa).

The signal sequence occupies residues 1-18 (MAIFCNNVLAALPTQCNP). Positions 19-70 (GFLDDLPPRIRKVCVALSRIYELGSEMESYIGDKENHITGFHESIPLLDSGV) are excised as a propeptide. At glutamine 73 the chain carries Pyrrolidone carboxylic acid. Phenylalanine 82 is modified (phenylalanine amide).

It localises to the secreted. Myoinhibiting neuropeptide. The chain is Myosuppressin from Apis mellifera (Honeybee).